The following is a 392-amino-acid chain: Heat-inducible transcription repressor HrcA (392 aa).

The protein belongs to the HrcA family.

Functionally, negative regulator of class I heat shock genes (grpE-dnaK-dnaJ and groELS operons). Prevents heat-shock induction of these operons. The polypeptide is Heat-inducible transcription repressor HrcA (Chlamydia trachomatis serovar L2 (strain ATCC VR-902B / DSM 19102 / 434/Bu)).